The primary structure comprises 1252 residues: DNA-directed RNA polymerase subunit beta (1252 aa).

This sequence belongs to the RNA polymerase beta chain family. As to quaternary structure, the RNAP catalytic core consists of 2 alpha, 1 beta, 1 beta' and 1 omega subunit. When a sigma factor is associated with the core the holoenzyme is formed, which can initiate transcription.

It carries out the reaction RNA(n) + a ribonucleoside 5'-triphosphate = RNA(n+1) + diphosphate. Its function is as follows. DNA-dependent RNA polymerase catalyzes the transcription of DNA into RNA using the four ribonucleoside triphosphates as substrates. This chain is DNA-directed RNA polymerase subunit beta, found in Chlamydia muridarum (strain MoPn / Nigg).